The sequence spans 443 residues: Aspartic protease PEP3 (443 aa).

The N-terminal stretch at 1 to 36 (MQNRPRVFDSAMNLSPNMHFLSLMPGLLLLSLQVHT) is a signal peptide. A propeptide spans 37–107 (SPTPLKKTIR…NTVSKAMQAN (71 aa)) (activation peptide). The region spanning 123-440 (YLSPVTIGGQ…DLRGPSLHVA (318 aa)) is the Peptidase A1 domain. Aspartate 139 is an active-site residue. Residues asparagine 180 and asparagine 293 are each glycosylated (N-linked (GlcNAc...) asparagine). Aspartate 327 is a catalytic residue. Cysteines 363 and 403 form a disulfide. 2 N-linked (GlcNAc...) asparagine glycosylation sites follow: asparagine 364 and asparagine 388.

It belongs to the peptidase A1 family. In terms of assembly, monomer.

The protein localises to the secreted. In terms of biological role, secreted aspartic endopeptidase that allows assimilation of proteinaceous substrates. The scissile peptide bond is attacked by a nucleophilic water molecule activated by two aspartic residues in the active site. Shows a broad primary substrate specificity. Favors hydrophobic residues at the P1 and P1' positions. The protein is Aspartic protease PEP3 of Coccidioides posadasii (strain C735) (Valley fever fungus).